A 122-amino-acid chain; its full sequence is Urocortin (122 aa).

The signal sequence occupies residues 1 to 25 (MRQRGRATLLVALLLLVQLRPESSQ). The propeptide occupies 26–80 (WSPAAAAANVVQDPNLRWNPGVRNQGGGVRALLLLLAERFPRRAGSEPAGERQRR). Val-120 carries the post-translational modification Valine amide.

The protein belongs to the sauvagine/corticotropin-releasing factor/urotensin I family. In terms of assembly, interacts with CRHR1 and CRHR2 (via their N-terminal extracellular domain).

It is found in the secreted. Acts in vitro to stimulate the secretion of adrenocorticotropic hormone (ACTH). Binds with high affinity to CRF receptor types 1, 2-alpha, and 2-beta. Plays a role in the establishment of normal hearing thresholds. Reduces food intake and regulates ghrelin levels in gastric body and plasma. The polypeptide is Urocortin (Ucn) (Rattus norvegicus (Rat)).